The primary structure comprises 90 residues: RNA-binding protein Hfq (90 aa).

The 61-residue stretch at 9-69 (DRFLNHLRVN…ISTIIPSSYV (61 aa)) folds into the Sm domain.

The protein belongs to the Hfq family. In terms of assembly, homohexamer.

Functionally, RNA chaperone that binds small regulatory RNA (sRNAs) and mRNAs to facilitate mRNA translational regulation in response to envelope stress, environmental stress and changes in metabolite concentrations. Also binds with high specificity to tRNAs. The polypeptide is RNA-binding protein Hfq (Thermotoga sp. (strain RQ2)).